The primary structure comprises 370 residues: UDP-N-acetylglucosamine--N-acetylmuramyl-(pentapeptide) pyrophosphoryl-undecaprenol N-acetylglucosamine transferase (370 aa).

UDP-N-acetyl-alpha-D-glucosamine contacts are provided by residues 15–17, N129, R170, S199, I254, and Q299; that span reads TGG.

The protein belongs to the glycosyltransferase 28 family. MurG subfamily.

Its subcellular location is the cell inner membrane. The catalysed reaction is di-trans,octa-cis-undecaprenyl diphospho-N-acetyl-alpha-D-muramoyl-L-alanyl-D-glutamyl-meso-2,6-diaminopimeloyl-D-alanyl-D-alanine + UDP-N-acetyl-alpha-D-glucosamine = di-trans,octa-cis-undecaprenyl diphospho-[N-acetyl-alpha-D-glucosaminyl-(1-&gt;4)]-N-acetyl-alpha-D-muramoyl-L-alanyl-D-glutamyl-meso-2,6-diaminopimeloyl-D-alanyl-D-alanine + UDP + H(+). The protein operates within cell wall biogenesis; peptidoglycan biosynthesis. Cell wall formation. Catalyzes the transfer of a GlcNAc subunit on undecaprenyl-pyrophosphoryl-MurNAc-pentapeptide (lipid intermediate I) to form undecaprenyl-pyrophosphoryl-MurNAc-(pentapeptide)GlcNAc (lipid intermediate II). The sequence is that of UDP-N-acetylglucosamine--N-acetylmuramyl-(pentapeptide) pyrophosphoryl-undecaprenol N-acetylglucosamine transferase from Magnetococcus marinus (strain ATCC BAA-1437 / JCM 17883 / MC-1).